Here is a 242-residue protein sequence, read N- to C-terminus: Uridylate kinase (242 aa).

ATP is bound at residue Lys-17–Gly-20. Residue Gly-59 coordinates UMP. Residues Gly-60 and Arg-64 each contribute to the ATP site. Residues Asp-79 and Thr-140–Thr-147 contribute to the UMP site. ATP is bound by residues Thr-167, Tyr-173, and Asp-176.

Belongs to the UMP kinase family. As to quaternary structure, homohexamer.

It localises to the cytoplasm. It carries out the reaction UMP + ATP = UDP + ADP. It functions in the pathway pyrimidine metabolism; CTP biosynthesis via de novo pathway; UDP from UMP (UMPK route): step 1/1. Its activity is regulated as follows. Inhibited by UTP. In terms of biological role, catalyzes the reversible phosphorylation of UMP to UDP. This is Uridylate kinase from Marinobacter nauticus (strain ATCC 700491 / DSM 11845 / VT8) (Marinobacter aquaeolei).